The primary structure comprises 204 residues: Chaperone protein TorD (204 aa).

The protein belongs to the TorD/DmsD family. TorD subfamily.

The protein resides in the cytoplasm. Functionally, involved in the biogenesis of TorA. Acts on TorA before the insertion of the molybdenum cofactor and, as a result, probably favors a conformation of the apoenzyme that is competent for acquiring the cofactor. This Shewanella baltica (strain OS223) protein is Chaperone protein TorD.